The sequence spans 101 residues: NAD(P)H-quinone oxidoreductase subunit 4L, chloroplastic (101 aa).

A run of 3 helical transmembrane segments spans residues 2-22 (IFEHALVLSAFLFSIGIYGLI), 32-52 (MCLELILNAVNINLVTFSDFF), and 61-81 (IFSIFVIAVAAAEAAIGPAIV).

The protein belongs to the complex I subunit 4L family. As to quaternary structure, NDH is composed of at least 16 different subunits, 5 of which are encoded in the nucleus.

The protein resides in the plastid. It is found in the chloroplast thylakoid membrane. The catalysed reaction is a plastoquinone + NADH + (n+1) H(+)(in) = a plastoquinol + NAD(+) + n H(+)(out). It catalyses the reaction a plastoquinone + NADPH + (n+1) H(+)(in) = a plastoquinol + NADP(+) + n H(+)(out). In terms of biological role, NDH shuttles electrons from NAD(P)H:plastoquinone, via FMN and iron-sulfur (Fe-S) centers, to quinones in the photosynthetic chain and possibly in a chloroplast respiratory chain. The immediate electron acceptor for the enzyme in this species is believed to be plastoquinone. Couples the redox reaction to proton translocation, and thus conserves the redox energy in a proton gradient. The sequence is that of NAD(P)H-quinone oxidoreductase subunit 4L, chloroplastic from Phaseolus vulgaris (Kidney bean).